We begin with the raw amino-acid sequence, 327 residues long: L-serine dehydratase/L-threonine deaminase (327 aa).

K41 is modified (N6-(pyridoxal phosphate)lysine).

The protein belongs to the serine/threonine dehydratase family. In terms of assembly, homodimer. It depends on pyridoxal 5'-phosphate as a cofactor.

Its subcellular location is the cytoplasm. The catalysed reaction is L-serine = pyruvate + NH4(+). It catalyses the reaction L-threonine = 2-oxobutanoate + NH4(+). The protein operates within carbohydrate biosynthesis; gluconeogenesis. Its function is as follows. Catalyzes the pyridoxal-phosphate-dependent dehydrative deamination of L-threonine and L-serine to ammonia and alpha-ketobutyrate and pyruvate, respectively. The chain is L-serine dehydratase/L-threonine deaminase (SDS) from Bos taurus (Bovine).